Here is a 689-residue protein sequence, read N- to C-terminus: Glycine--tRNA ligase beta subunit (689 aa).

Belongs to the class-II aminoacyl-tRNA synthetase family. As to quaternary structure, tetramer of two alpha and two beta subunits.

It localises to the cytoplasm. The enzyme catalyses tRNA(Gly) + glycine + ATP = glycyl-tRNA(Gly) + AMP + diphosphate. This is Glycine--tRNA ligase beta subunit from Shigella boydii serotype 18 (strain CDC 3083-94 / BS512).